Here is a 168-residue protein sequence, read N- to C-terminus: Protein-export protein SecB (168 aa).

This sequence belongs to the SecB family. In terms of assembly, homotetramer, a dimer of dimers. One homotetramer interacts with 1 SecA dimer.

It is found in the cytoplasm. Its function is as follows. One of the proteins required for the normal export of preproteins out of the cell cytoplasm. It is a molecular chaperone that binds to a subset of precursor proteins, maintaining them in a translocation-competent state. It also specifically binds to its receptor SecA. This chain is Protein-export protein SecB, found in Thioalkalivibrio sulfidiphilus (strain HL-EbGR7).